A 437-amino-acid polypeptide reads, in one-letter code: Vasoactive intestinal polypeptide receptor 2 (437 aa).

The N-terminal stretch at 1–22 (MRASVVLTCYCWLLVRVSSIHP) is a signal peptide. The Extracellular portion of the chain corresponds to 23–123 (ECRFHLEIQE…EDESKISFYI (101 aa)). Cystine bridges form between C37-C60, C51-C92, and C74-C108. N-linked (GlcNAc...) asparagine glycosylation is found at N57, N87, and N91. Residues 124-149 (LVKAIYTLGYSVSLMSLTTGSIIICL) form a helical membrane-spanning segment. Topologically, residues 150-157 (FRKLHCTR) are cytoplasmic. The chain crosses the membrane as a helical span at residues 158-179 (NYIHLNLFLSFMLRAISVLVKD). Topologically, residues 180–202 (SVLYSSSGLLRCHDQPASWVGCK) are extracellular. An intrachain disulfide couples C201 to C270. A helical transmembrane segment spans residues 203–227 (LSLVFFQYCIMANFYWLLVEGLYLH). Residues 228 to 238 (TLLVAILPPSR) are Cytoplasmic-facing. Residues 239 to 260 (CFLAYLLIGWGIPSVCIGAWTA) form a helical membrane-spanning segment. The Extracellular segment spans residues 261–279 (TRLSLEDTGCWDTNDHSIP). The helical transmembrane segment at 280-303 (WWVIRMPILISIVVNFALFISIVR) threads the bilayer. Topologically, residues 304-324 (ILLQKLTSPDVGGNDQSQYKR) are cytoplasmic. The chain crosses the membrane as a helical span at residues 325 to 345 (LAKSTLLLIPLFGVHYMVFAA). Residues 346–353 (FPIGISST) are Extracellular-facing. Residues 354–377 (YQILFELCVGSFQGLVVAVLYCFL) form a helical membrane-spanning segment. The Cytoplasmic segment spans residues 378–437 (NSEVQCELKRRWRGLCLTQAGSRDYRLHSWSMSRNGSESALQIHRGSRTQSFLQSETSVI).

Belongs to the G-protein coupled receptor 2 family. As to quaternary structure, interacts with ADCYAP1/PACAP (via N-terminal extracellular domain); activated by PACAP27 and CAPAC38 neuropeptides. Interacts with VIP; the interaction results in VIPR1 activation. As to expression, expressed at high levels in the MIN6 cells, at moderate levels in pancreatic islets, insulin-secreting cells, lung, brain, stomach, and colon, and at low levels in the heart.

It is found in the cell membrane. Its function is as follows. G protein-coupled receptor activated by the neuropeptides vasoactive intestinal peptide (VIP) and pituitary adenylate cyclase-activating polypeptide (ADCYAP1/PACAP). Binds VIP and both PACAP27 and PACAP38 bioactive peptides with the order of ligand affinity of VIP = PACAP38 &gt; PACAP27. Ligand binding causes a conformation change that triggers signaling via guanine nucleotide-binding proteins (G proteins) and modulates the activity of downstream effectors. Activates cAMP-dependent pathway. May be coupled to phospholipase C. This Mus musculus (Mouse) protein is Vasoactive intestinal polypeptide receptor 2.